Reading from the N-terminus, the 100-residue chain is Probable antitoxin MazE4 (100 aa).

A disordered region spans residues 77–100; the sequence is PYESEAERSAARARRNARQQRSAQ.

In terms of assembly, forms a complex with cognate toxin MazF4.

Functionally, antitoxin component of a type II toxin-antitoxin (TA) system. Labile antitoxin that binds to cognate MazF4 toxin and counteracts its endoribonuclease activity. The sequence is that of Probable antitoxin MazE4 (mazE4) from Mycobacterium tuberculosis (strain CDC 1551 / Oshkosh).